Consider the following 174-residue polypeptide: 3-hydroxydecanoyl-[acyl-carrier-protein] dehydratase (174 aa).

H71 is a catalytic residue.

Belongs to the thioester dehydratase family. FabA subfamily. As to quaternary structure, homodimer.

It is found in the cytoplasm. It carries out the reaction a (3R)-hydroxyacyl-[ACP] = a (2E)-enoyl-[ACP] + H2O. It catalyses the reaction (3R)-hydroxydecanoyl-[ACP] = (2E)-decenoyl-[ACP] + H2O. The enzyme catalyses (2E)-decenoyl-[ACP] = (3Z)-decenoyl-[ACP]. It functions in the pathway lipid metabolism; fatty acid biosynthesis. In terms of biological role, necessary for the introduction of cis unsaturation into fatty acids. Catalyzes the dehydration of (3R)-3-hydroxydecanoyl-ACP to E-(2)-decenoyl-ACP and then its isomerization to Z-(3)-decenoyl-ACP. Can catalyze the dehydratase reaction for beta-hydroxyacyl-ACPs with saturated chain lengths up to 16:0, being most active on intermediate chain length. The polypeptide is 3-hydroxydecanoyl-[acyl-carrier-protein] dehydratase (Nitrobacter hamburgensis (strain DSM 10229 / NCIMB 13809 / X14)).